Consider the following 172-residue polypeptide: Peptide methionine sulfoxide reductase MsrA 1 (172 aa).

Cysteine 14 is an active-site residue.

This sequence belongs to the MsrA Met sulfoxide reductase family.

The catalysed reaction is L-methionyl-[protein] + [thioredoxin]-disulfide + H2O = L-methionyl-(S)-S-oxide-[protein] + [thioredoxin]-dithiol. It catalyses the reaction [thioredoxin]-disulfide + L-methionine + H2O = L-methionine (S)-S-oxide + [thioredoxin]-dithiol. Has an important function as a repair enzyme for proteins that have been inactivated by oxidation. Catalyzes the reversible oxidation-reduction of methionine sulfoxide in proteins to methionine. The protein is Peptide methionine sulfoxide reductase MsrA 1 (msrA1) of Mesorhizobium japonicum (strain LMG 29417 / CECT 9101 / MAFF 303099) (Mesorhizobium loti (strain MAFF 303099)).